The following is a 225-amino-acid chain: Orotate phosphoribosyltransferase (225 aa).

Lys-29 serves as a coordination point for 5-phospho-alpha-D-ribose 1-diphosphate. Residue 37–38 (FF) coordinates orotate. 5-phospho-alpha-D-ribose 1-diphosphate contacts are provided by residues 75-76 (YK), Arg-101, Lys-102, Lys-105, His-107, and 126-134 (DDVISAGTS). Ser-130 and Arg-158 together coordinate orotate.

This sequence belongs to the purine/pyrimidine phosphoribosyltransferase family. PyrE subfamily. Homodimer. The cofactor is Mg(2+).

The enzyme catalyses orotidine 5'-phosphate + diphosphate = orotate + 5-phospho-alpha-D-ribose 1-diphosphate. It participates in pyrimidine metabolism; UMP biosynthesis via de novo pathway; UMP from orotate: step 1/2. Functionally, catalyzes the transfer of a ribosyl phosphate group from 5-phosphoribose 1-diphosphate to orotate, leading to the formation of orotidine monophosphate (OMP). This is Orotate phosphoribosyltransferase from Ralstonia pickettii (strain 12J).